The primary structure comprises 208 residues: Outer-membrane lipoprotein carrier protein (208 aa).

Residues M1–A22 form the signal peptide.

Belongs to the LolA family. As to quaternary structure, monomer.

It is found in the periplasm. Participates in the translocation of lipoproteins from the inner membrane to the outer membrane. Only forms a complex with a lipoprotein if the residue after the N-terminal Cys is not an aspartate (The Asp acts as a targeting signal to indicate that the lipoprotein should stay in the inner membrane). This Shewanella putrefaciens (strain CN-32 / ATCC BAA-453) protein is Outer-membrane lipoprotein carrier protein.